The chain runs to 173 residues: Protein Rv3753c (173 aa).

This Mycobacterium tuberculosis (strain ATCC 25618 / H37Rv) protein is Protein Rv3753c.